A 747-amino-acid chain; its full sequence is Eukaryotic translation initiation factor 3 subunit B (747 aa).

The RRM domain occupies 42 to 128 (AFVVVDGLPE…HTLRVNKLTD (87 aa)). WD repeat units follow at residues 195–234 (DRQH…RQRR), 236–292 (AHPF…PLRS), 310–349 (APKF…LLDK), 520–563 (LEKK…EKPE), and 578–623 (ADHY…LREE).

It belongs to the eIF-3 subunit B family. As to quaternary structure, component of the eukaryotic translation initiation factor 3 (eIF-3) complex.

The protein localises to the cytoplasm. Functionally, RNA-binding component of the eukaryotic translation initiation factor 3 (eIF-3) complex, which is involved in protein synthesis of a specialized repertoire of mRNAs and, together with other initiation factors, stimulates binding of mRNA and methionyl-tRNAi to the 40S ribosome. The eIF-3 complex specifically targets and initiates translation of a subset of mRNAs involved in cell proliferation. The sequence is that of Eukaryotic translation initiation factor 3 subunit B (prt-1) from Neurospora crassa (strain ATCC 24698 / 74-OR23-1A / CBS 708.71 / DSM 1257 / FGSC 987).